The chain runs to 101 residues: Urease subunit beta (101 aa).

This sequence belongs to the urease beta subunit family. Heterotrimer of UreA (gamma), UreB (beta) and UreC (alpha) subunits. Three heterotrimers associate to form the active enzyme.

Its subcellular location is the cytoplasm. The enzyme catalyses urea + 2 H2O + H(+) = hydrogencarbonate + 2 NH4(+). It participates in nitrogen metabolism; urea degradation; CO(2) and NH(3) from urea (urease route): step 1/1. This chain is Urease subunit beta, found in Actinobacillus pleuropneumoniae serotype 7 (strain AP76).